A 208-amino-acid polypeptide reads, in one-letter code: dITP/XTP pyrophosphatase (208 aa).

Residue 16–21 coordinates substrate; it reads TGNAGK. Residues Glu46 and Asp75 each contribute to the Mg(2+) site. Asp75 functions as the Proton acceptor in the catalytic mechanism. Residues Ser76, 155–158, Lys178, and 183–184 contribute to the substrate site; these read FGYD and HR.

This sequence belongs to the HAM1 NTPase family. In terms of assembly, homodimer. Requires Mg(2+) as cofactor.

It carries out the reaction XTP + H2O = XMP + diphosphate + H(+). The enzyme catalyses dITP + H2O = dIMP + diphosphate + H(+). It catalyses the reaction ITP + H2O = IMP + diphosphate + H(+). Its function is as follows. Pyrophosphatase that catalyzes the hydrolysis of nucleoside triphosphates to their monophosphate derivatives, with a high preference for the non-canonical purine nucleotides XTP (xanthosine triphosphate), dITP (deoxyinosine triphosphate) and ITP. Seems to function as a house-cleaning enzyme that removes non-canonical purine nucleotides from the nucleotide pool, thus preventing their incorporation into DNA/RNA and avoiding chromosomal lesions. The polypeptide is dITP/XTP pyrophosphatase (Deinococcus deserti (strain DSM 17065 / CIP 109153 / LMG 22923 / VCD115)).